The following is a 132-amino-acid chain: Small ribosomal subunit protein uS8 (132 aa).

It belongs to the universal ribosomal protein uS8 family. As to quaternary structure, part of the 30S ribosomal subunit. Contacts proteins S5 and S12.

One of the primary rRNA binding proteins, it binds directly to 16S rRNA central domain where it helps coordinate assembly of the platform of the 30S subunit. The sequence is that of Small ribosomal subunit protein uS8 from Bacillus anthracis (strain A0248).